The primary structure comprises 474 residues: Ribulose bisphosphate carboxylase large chain (474 aa).

Residues N123 and T173 each contribute to the substrate site. Catalysis depends on K175, which acts as the Proton acceptor. Residue K177 coordinates substrate. Mg(2+) is bound by residues K201, D203, and E204. K201 is modified (N6-carboxylysine). H293 functions as the Proton acceptor in the catalytic mechanism. Residues R294, H326, and S378 each coordinate substrate.

It belongs to the RuBisCO large chain family. Type I subfamily. As to quaternary structure, heterohexadecamer of 8 large chains and 8 small chains; disulfide-linked. The disulfide link is formed within the large subunit homodimers. Mg(2+) is required as a cofactor. The disulfide bond which can form in the large chain dimeric partners within the hexadecamer appears to be associated with oxidative stress and protein turnover.

The protein resides in the carboxysome. The enzyme catalyses 2 (2R)-3-phosphoglycerate + 2 H(+) = D-ribulose 1,5-bisphosphate + CO2 + H2O. It carries out the reaction D-ribulose 1,5-bisphosphate + O2 = 2-phosphoglycolate + (2R)-3-phosphoglycerate + 2 H(+). In terms of biological role, ruBisCO catalyzes two reactions: the carboxylation of D-ribulose 1,5-bisphosphate, the primary event in carbon dioxide fixation, as well as the oxidative fragmentation of the pentose substrate in the photorespiration process. Both reactions occur simultaneously and in competition at the same active site. The polypeptide is Ribulose bisphosphate carboxylase large chain (Synechococcus sp).